The primary structure comprises 185 residues: Peptidyl-tRNA hydrolase (185 aa).

Position 14 (Tyr-14) interacts with tRNA. His-19 (proton acceptor) is an active-site residue. TRNA-binding residues include Tyr-64, Asn-66, and Asn-112.

The protein belongs to the PTH family. In terms of assembly, monomer.

The protein resides in the cytoplasm. The catalysed reaction is an N-acyl-L-alpha-aminoacyl-tRNA + H2O = an N-acyl-L-amino acid + a tRNA + H(+). In terms of biological role, hydrolyzes ribosome-free peptidyl-tRNAs (with 1 or more amino acids incorporated), which drop off the ribosome during protein synthesis, or as a result of ribosome stalling. Functionally, catalyzes the release of premature peptidyl moieties from peptidyl-tRNA molecules trapped in stalled 50S ribosomal subunits, and thus maintains levels of free tRNAs and 50S ribosomes. In Lactobacillus acidophilus (strain ATCC 700396 / NCK56 / N2 / NCFM), this protein is Peptidyl-tRNA hydrolase.